Reading from the N-terminus, the 135-residue chain is NADH-quinone oxidoreductase subunit K (135 aa).

3 consecutive transmembrane segments (helical) span residues 33–53, 63–83, and 95–115; these read VLGL…FAIG, FLFM…AFVV, and IMFI…LAIL.

Belongs to the complex I subunit 4L family. As to quaternary structure, NDH-1 is composed of 14 different subunits. Subunits NuoA, H, J, K, L, M, N constitute the membrane sector of the complex.

Its subcellular location is the cell inner membrane. The catalysed reaction is a quinone + NADH + 5 H(+)(in) = a quinol + NAD(+) + 4 H(+)(out). In terms of biological role, NDH-1 shuttles electrons from NADH, via FMN and iron-sulfur (Fe-S) centers, to quinones in the respiratory chain. The immediate electron acceptor for the enzyme in this species is believed to be ubiquinone. Couples the redox reaction to proton translocation (for every two electrons transferred, four hydrogen ions are translocated across the cytoplasmic membrane), and thus conserves the redox energy in a proton gradient. This chain is NADH-quinone oxidoreductase subunit K, found in Psychrobacter arcticus (strain DSM 17307 / VKM B-2377 / 273-4).